The following is a 196-amino-acid chain: MREFHYGVHMLAVEVGDITESDAEAIVNAANSSLMGGGGVDGAIHSAAGPELNGELVKIRRERYPNGLPPGEAVITRGYRLKASHIIHTVGPVWMGGRNGEDDVLYRSYRSCLDLAREFGIHDIAFPALSTGAYGFPFDRAERIAIRSVIDFLKDESAGYTVRFVFYTEDQGKRFLFILSDLGLPVNWNRDVQENT.

The Macro domain occupies 1–183 (MREFHYGVHM…RFLFILSDLG (183 aa)).

It belongs to the MacroD-type family.

This is an uncharacterized protein from Thermoplasma acidophilum (strain ATCC 25905 / DSM 1728 / JCM 9062 / NBRC 15155 / AMRC-C165).